A 920-amino-acid chain; its full sequence is Dynamin-2B (920 aa).

Position 1 is an N-acetylmethionine (M1). The 269-residue stretch at 35–303 (PATSLNVVAL…IRSRMKLRLP (269 aa)) folds into the Dynamin-type G domain. The segment at 45-52 (GNVGAGKS) is G1 motif. 45-53 (GNVGAGKSA) provides a ligand contact to GTP. A G2 motif region spans residues 71–73 (ATR). A G3 motif region spans residues 143-146 (DLPG). The interval 204-207 (SKID) is G4 motif. 204–210 (SKIDQAA) provides a ligand contact to GTP. Residues 238–241 (ALIG) form a G5 motif region. Position 246 to 249 (246 to 249 (IASA)) interacts with GTP. A compositionally biased stretch (basic and acidic residues) spans 507-522 (RREEELKGRSSKKGQD). 2 disordered regions span residues 507 to 577 (RREE…TAGP) and 632 to 657 (IEEI…PDSK). Residues 523-545 (AEQSLLNRATSPQPDGPSSTGGS) are compositionally biased toward polar residues. Basic and acidic residues-rich tracts occupy residues 548–567 (SLRD…KETP) and 641–652 (EKSKSSKDKKSN). The region spanning 579-703 (GEITAGYLMK…WINKLQKVIQ (125 aa)) is the PH domain. The 94-residue stretch at 737-830 (LRWMSQEVRG…QLSIHDNRAA (94 aa)) folds into the GED domain. The interval 747-761 (YVEAVLNSLAANVPK) is important for homodimerization. Residues 788–812 (NERIESLIQEDQNVKRRRDRYQKQS) adopt a coiled-coil conformation. The tract at residues 828 to 920 (RAAAASSWSD…PPQSGSSYRY (93 aa)) is disordered. The segment covering 833 to 849 (SSWSDNSGTESSPRTNG) has biased composition (polar residues).

The protein belongs to the TRAFAC class dynamin-like GTPase superfamily. Dynamin/Fzo/YdjA family. In terms of assembly, interacts with DRP1A at the plasma membrane and in forming clathrin-coated vesicles (CCV). In terms of tissue distribution, ubiquitous. Preferentially expressed in siliques.

The protein localises to the cytoplasm. The protein resides in the cytoskeleton. Its subcellular location is the cytoplasmic vesicle. It is found in the clathrin-coated vesicle. It localises to the cell membrane. The catalysed reaction is GTP + H2O = GDP + phosphate + H(+). In terms of biological role, putative microtubule-associated force-producing protein, able to bind and hydrolyze GTP. Collaboratively with DRP1A, participates in clathrin-coated vesicle formation during endocytosis. With DRP1A and PIP5K3, required for the precise coordination of polar ARAC3/ROP6 and ARAC4/ROP2 placement and subsequent root hair positioning during planar polarity formation in root hair-forming cells. This is Dynamin-2B from Arabidopsis thaliana (Mouse-ear cress).